The primary structure comprises 728 residues: Catalase-peroxidase 2 (728 aa).

Positions 91-214 (WHAAGTYRTG…LAAVQMGLIY (124 aa)) form a cross-link, tryptophyl-tyrosyl-methioninium (Trp-Tyr) (with M-240). The active-site Proton acceptor is H92. A cross-link (tryptophyl-tyrosyl-methioninium (Tyr-Met) (with W-91)) is located at residues 214–240 (YVNPEGPNGNPDPAKAAVDIRETFARM). Residue H255 coordinates heme b. Residues 338-362 (WKPNGDAGANSIPDPYDPSRRRGPT) form a disordered region.

It belongs to the peroxidase family. Peroxidase/catalase subfamily. In terms of assembly, homodimer or homotetramer. It depends on heme b as a cofactor. Formation of the three residue Trp-Tyr-Met cross-link is important for the catalase, but not the peroxidase activity of the enzyme.

It carries out the reaction H2O2 + AH2 = A + 2 H2O. The catalysed reaction is 2 H2O2 = O2 + 2 H2O. Functionally, bifunctional enzyme with both catalase and broad-spectrum peroxidase activity. The protein is Catalase-peroxidase 2 of Cupriavidus pinatubonensis (strain JMP 134 / LMG 1197) (Cupriavidus necator (strain JMP 134)).